A 111-amino-acid chain; its full sequence is Small ribosomal subunit protein uS10 (111 aa).

The protein belongs to the universal ribosomal protein uS10 family. Part of the 30S ribosomal subunit.

Involved in the binding of tRNA to the ribosomes. This is Small ribosomal subunit protein uS10 from Xanthomonas euvesicatoria pv. vesicatoria (strain 85-10) (Xanthomonas campestris pv. vesicatoria).